The primary structure comprises 333 residues: GTP 3',8-cyclase (333 aa).

The Radical SAM core domain maps to 7–221 (KFGRVHDYIR…FEACNEAGYE (215 aa)). Arg-16 serves as a coordination point for GTP. Cys-23 and Cys-27 together coordinate [4Fe-4S] cluster. An S-adenosyl-L-methionine-binding site is contributed by Tyr-29. Cys-30 is a [4Fe-4S] cluster binding site. Arg-66 lines the GTP pocket. Gly-70 is an S-adenosyl-L-methionine binding site. A GTP-binding site is contributed by Thr-97. Residue Ser-121 participates in S-adenosyl-L-methionine binding. Lys-158 contacts GTP. Met-192 contacts S-adenosyl-L-methionine. The [4Fe-4S] cluster site is built by Cys-257 and Cys-260. 262–264 (RLR) contributes to the GTP binding site. Cys-274 serves as a coordination point for [4Fe-4S] cluster.

This sequence belongs to the radical SAM superfamily. MoaA family. As to quaternary structure, monomer and homodimer. It depends on [4Fe-4S] cluster as a cofactor.

It catalyses the reaction GTP + AH2 + S-adenosyl-L-methionine = (8S)-3',8-cyclo-7,8-dihydroguanosine 5'-triphosphate + 5'-deoxyadenosine + L-methionine + A + H(+). It participates in cofactor biosynthesis; molybdopterin biosynthesis. Catalyzes the cyclization of GTP to (8S)-3',8-cyclo-7,8-dihydroguanosine 5'-triphosphate. The sequence is that of GTP 3',8-cyclase from Listeria monocytogenes serovar 1/2a (strain ATCC BAA-679 / EGD-e).